The following is a 366-amino-acid chain: Phospho-N-acetylmuramoyl-pentapeptide-transferase (366 aa).

Transmembrane regions (helical) follow at residues 3 to 23 (QIII…PILI), 55 to 75 (IAII…SYFA), 80 to 100 (FTAS…TGFA), 118 to 138 (AKLI…LRFP), 161 to 181 (IAFG…YVVV), 197 to 217 (LAAG…FWQF), 238 to 258 (IAVL…WNAA), 262 to 282 (IFMG…ISVV), 290 to 310 (VIIG…IAVF), and 341 to 361 (FWLI…GDWL).

The protein belongs to the glycosyltransferase 4 family. MraY subfamily. It depends on Mg(2+) as a cofactor.

The protein localises to the cell membrane. The enzyme catalyses UDP-N-acetyl-alpha-D-muramoyl-L-alanyl-gamma-D-glutamyl-meso-2,6-diaminopimeloyl-D-alanyl-D-alanine + di-trans,octa-cis-undecaprenyl phosphate = di-trans,octa-cis-undecaprenyl diphospho-N-acetyl-alpha-D-muramoyl-L-alanyl-D-glutamyl-meso-2,6-diaminopimeloyl-D-alanyl-D-alanine + UMP. Its pathway is cell wall biogenesis; peptidoglycan biosynthesis. In terms of biological role, catalyzes the initial step of the lipid cycle reactions in the biosynthesis of the cell wall peptidoglycan: transfers peptidoglycan precursor phospho-MurNAc-pentapeptide from UDP-MurNAc-pentapeptide onto the lipid carrier undecaprenyl phosphate, yielding undecaprenyl-pyrophosphoryl-MurNAc-pentapeptide, known as lipid I. The sequence is that of Phospho-N-acetylmuramoyl-pentapeptide-transferase from Corynebacterium efficiens (strain DSM 44549 / YS-314 / AJ 12310 / JCM 11189 / NBRC 100395).